We begin with the raw amino-acid sequence, 287 residues long: 4-diphosphocytidyl-2-C-methyl-D-erythritol kinase (287 aa).

K11 is a catalytic residue. Position 93–103 (93–103 (PFGAGLGGGSS)) interacts with ATP. D135 is an active-site residue.

Belongs to the GHMP kinase family. IspE subfamily.

The catalysed reaction is 4-CDP-2-C-methyl-D-erythritol + ATP = 4-CDP-2-C-methyl-D-erythritol 2-phosphate + ADP + H(+). It participates in isoprenoid biosynthesis; isopentenyl diphosphate biosynthesis via DXP pathway; isopentenyl diphosphate from 1-deoxy-D-xylulose 5-phosphate: step 3/6. Its function is as follows. Catalyzes the phosphorylation of the position 2 hydroxy group of 4-diphosphocytidyl-2C-methyl-D-erythritol. The sequence is that of 4-diphosphocytidyl-2-C-methyl-D-erythritol kinase from Chlorobium luteolum (strain DSM 273 / BCRC 81028 / 2530) (Pelodictyon luteolum).